The chain runs to 338 residues: tRNA N6-adenosine threonylcarbamoyltransferase (338 aa).

2 residues coordinate Fe cation: H111 and H115. Substrate-binding positions include 134–138 (LVSGG), D167, G180, and N272. A Fe cation-binding site is contributed by D300.

Belongs to the KAE1 / TsaD family. The cofactor is Fe(2+).

Its subcellular location is the cytoplasm. The catalysed reaction is L-threonylcarbamoyladenylate + adenosine(37) in tRNA = N(6)-L-threonylcarbamoyladenosine(37) in tRNA + AMP + H(+). Required for the formation of a threonylcarbamoyl group on adenosine at position 37 (t(6)A37) in tRNAs that read codons beginning with adenine. Is involved in the transfer of the threonylcarbamoyl moiety of threonylcarbamoyl-AMP (TC-AMP) to the N6 group of A37, together with TsaE and TsaB. TsaD likely plays a direct catalytic role in this reaction. The chain is tRNA N6-adenosine threonylcarbamoyltransferase from Aliivibrio fischeri (strain MJ11) (Vibrio fischeri).